Reading from the N-terminus, the 324-residue chain is HTH-type transcriptional regulator CysB (324 aa).

The 59-residue stretch at Met1–Val59 folds into the HTH lysR-type domain. A DNA-binding region (H-T-H motif) is located at residues Val19–Arg38.

Belongs to the LysR transcriptional regulatory family. In terms of assembly, homotetramer.

It is found in the cytoplasm. This protein is a positive regulator of gene expression for the cysteine regulon. The inducer for CysB is N-acetylserine. Thiosulfate and sulfide act as anti-inducers. In Klebsiella pneumoniae, this protein is HTH-type transcriptional regulator CysB (cysB).